The chain runs to 337 residues: Ferredoxin--NADP reductase (337 aa).

FAD is bound by residues Asp-35, Gln-43, Tyr-48, Ala-88, Phe-122, Asp-289, and Thr-330.

It belongs to the ferredoxin--NADP reductase type 2 family. In terms of assembly, homodimer. The cofactor is FAD.

The catalysed reaction is 2 reduced [2Fe-2S]-[ferredoxin] + NADP(+) + H(+) = 2 oxidized [2Fe-2S]-[ferredoxin] + NADPH. The polypeptide is Ferredoxin--NADP reductase (Ehrlichia ruminantium (strain Welgevonden)).